The sequence spans 427 residues: Tol-Pal system protein TolB (427 aa).

Positions M1–A23 are cleaved as a signal peptide.

The protein belongs to the TolB family. The Tol-Pal system is composed of five core proteins: the inner membrane proteins TolA, TolQ and TolR, the periplasmic protein TolB and the outer membrane protein Pal. They form a network linking the inner and outer membranes and the peptidoglycan layer.

The protein resides in the periplasm. In terms of biological role, part of the Tol-Pal system, which plays a role in outer membrane invagination during cell division and is important for maintaining outer membrane integrity. This chain is Tol-Pal system protein TolB, found in Haemophilus influenzae (strain PittEE).